A 201-amino-acid chain; its full sequence is Recombination protein RecR (201 aa).

The segment at 57–72 (CADCRTFTEQDVCNIC) adopts a C4-type zinc-finger fold. In terms of domain architecture, Toprim spans 81–176 (GQICVVESPA…EASRIAHGVP (96 aa)).

Belongs to the RecR family.

Its function is as follows. May play a role in DNA repair. It seems to be involved in an RecBC-independent recombinational process of DNA repair. It may act with RecF and RecO. The polypeptide is Recombination protein RecR (Citrobacter koseri (strain ATCC BAA-895 / CDC 4225-83 / SGSC4696)).